The primary structure comprises 333 residues: Protein-methionine-sulfoxide reductase catalytic subunit MsrP (333 aa).

The segment at residues 1–43 (MHKHRKPTEADVTPESLFYQRRRILKALGISAAALSLPFSAQA) is a signal peptide (tat-type signal). Residues asparagine 87, 90–91 (YE), cysteine 145, threonine 180, asparagine 232, arginine 237, and 248–250 (NIK) contribute to the Mo-molybdopterin site.

Belongs to the MsrP family. Heterodimer of a catalytic subunit (MsrP) and a heme-binding subunit (MsrQ). The cofactor is Mo-molybdopterin. Predicted to be exported by the Tat system. The position of the signal peptide cleavage has not been experimentally proven.

It is found in the periplasm. The catalysed reaction is L-methionyl-[protein] + a quinone + H2O = L-methionyl-(S)-S-oxide-[protein] + a quinol. The enzyme catalyses L-methionyl-[protein] + a quinone + H2O = L-methionyl-(R)-S-oxide-[protein] + a quinol. Functionally, part of the MsrPQ system that repairs oxidized periplasmic proteins containing methionine sulfoxide residues (Met-O), using respiratory chain electrons. Thus protects these proteins from oxidative-stress damage caused by reactive species of oxygen and chlorine generated by the host defense mechanisms. MsrPQ is essential for the maintenance of envelope integrity under bleach stress, rescuing a wide series of structurally unrelated periplasmic proteins from methionine oxidation. The catalytic subunit MsrP is non-stereospecific, being able to reduce both (R-) and (S-) diastereoisomers of methionine sulfoxide. The sequence is that of Protein-methionine-sulfoxide reductase catalytic subunit MsrP from Pectobacterium carotovorum subsp. carotovorum (strain PC1).